Consider the following 181-residue polypeptide: Early E3 20.3 kDa glycoprotein (181 aa).

4 N-linked (GlcNAc...) asparagine; by host glycosylation sites follow: N29, N57, N70, and N75.

Belongs to the adenoviridae E3_20 family.

Functionally, E3 proteins seem to be dispensable for virus growth in tissue culture cells. They are potentially important for virus growth under special conditions; E3 region may help adenoviruses to evade the immune surveillance of the host. This Homo sapiens (Human) protein is Early E3 20.3 kDa glycoprotein.